Consider the following 198-residue polypeptide: MSNVRVSNGSPSLERMDARQAEHPKPSACRNLFGPVNHEELTRDLEKHCRDMEEASQRKWNFDFQNHNPLEGRYQWQEVDKGSLPEFYYRPPRPPKGACKVPAQESQDVSGSRQAVPSIGSQAYSEDRHLVEQMPDPTDSPAGLAEQCPGMRKRPAADDSSSQNKRANRTEENVSDGSLNAGSVEQTPKKPGLRRHQT.

Over residues Met-1–Pro-11 the composition is skewed to polar residues. The interval Met-1–Gly-34 is disordered. Position 10 is a phosphoserine; by UHMK1 (Ser-10). The segment covering Glu-14–Lys-25 has biased composition (basic and acidic residues). Residues Asp-51 to Pro-91 form an interaction with CDK2 region. Position 74 is a phosphotyrosine; by SRC (Tyr-74). The tract at residues Pro-85 to Thr-198 is disordered. Tyr-88 carries the phosphotyrosine; by ABL, LYN and SRC modification. The residue at position 89 (Tyr-89) is a Phosphotyrosine. Positions Gln-104–Tyr-124 are enriched in polar residues. The Nuclear localization signal signature appears at Lys-153–Arg-169. Thr-170 carries the post-translational modification Phosphothreonine. A compositionally biased stretch (polar residues) spans Ser-175–Gln-186. Phosphothreonine; by PKB/AKT1, CDK1 and CDK2 is present on Thr-187. Position 198 is a phosphothreonine; by CaMK1, PKB/AKT1, RPS6KA1, RPS6KA3 and PIM1 (Thr-198).

It belongs to the CDI family. Forms a ternary complex composed of CCNE1, CDK2 and CDKN1B. Interacts directly with CCNE1; the interaction is inhibited by CDK2-dependent phosphorylation on Thr-187. Interacts with COPS5, subunit of the COP9 signalosome complex; the interaction leads to CDKN1B degradation. Interacts with NUP50; the interaction leads to nuclear import and degradation of phosphorylated CDKN1B. Interacts with CCND1 and SNX6. Interacts (Thr-198-phosphorylated form) with 14-3-3 proteins, binds strongly YWHAQ, weakly YWHAE and YWHAH, but not YWHAB nor YWHAZ; the interaction with YWHAQ results in translocation to the cytoplasm. Interacts with AKT1 and LYN; the interactions lead to cytoplasmic mislocation, phosphorylation of CDKN1B and inhibition of cell cycle arrest. Forms a ternary complex with CCNA2 and CDK2; CDKN1B inhibits the kinase activity of CDK2 through conformational rearrangements. Interacts (unphosphorylated form) with CDK2. Forms a complex with CDK2 and SPDYA, but does not directly interact with SPDYA. Forms a ternary complex composed of cyclin D, CDK4 and CDKN1B. Interacts (phosphorylated on Tyr-88 and Tyr-89) with CDK4; the interaction is required for cyclin D and CDK4 complex assembly, induces nuclear translocation and activates the CDK4 kinase activity. Interacts with GRB2. Interacts with PIM1. Identified in a complex with SKP1, SKP2 and CKS1B. Interacts with UHMK1; the interaction leads to cytoplasmic mislocation, phosphorylation of CDKN1B and inhibition of cell cycle arrest. Also interacts with CDK1. Dephosphorylated on Thr-187 by PPM1H, leading to CDKN1B stability. Post-translationally, phosphorylated; phosphorylation occurs on serine, threonine and tyrosine residues. Phosphorylation on Ser-10 is the major site of phosphorylation in resting cells, takes place at the G(0)-G(1) phase and leads to protein stability. Phosphorylation on other sites is greatly enhanced by mitogens, growth factors, cMYC and in certain cancer cell lines. The phosphorylated form found in the cytoplasm is inactivate. Phosphorylation on Thr-198 is required for interaction with 14-3-3 proteins. Phosphorylation on Thr-187, by CDK1 and CDK2 leads to protein ubiquitination and proteasomal degradation. Tyrosine phosphorylation promotes this process. Phosphorylation by PKB/AKT1 can be suppressed by LY294002, an inhibitor of the catalytic subunit of PI3K. Phosphorylation on Tyr-88 and Tyr-89 has no effect on binding CDK2, but is required for binding CDK4. Dephosphorylated on tyrosine residues by G-CSF. Dephosphorylated on Thr-187 by PPM1H, leading to CDKN1B stability. In terms of processing, ubiquitinated; in the cytoplasm by the KPC complex (composed of RNF123/KPC1 and UBAC1/KPC2) and, in the nucleus, by SCF(SKP2). The latter requires prior phosphorylation on Thr-187. Ubiquitinated; by a TRIM21-containing SCF(SKP2)-like complex; leads to its degradation. Subject to degradation in the lysosome. Interaction with SNX6 promotes lysosomal degradation.

The protein resides in the nucleus. It localises to the cytoplasm. It is found in the endosome. In terms of biological role, important regulator of cell cycle progression. Inhibits the kinase activity of CDK2 bound to cyclin A, but has little inhibitory activity on CDK2 bound to SPDYA. Involved in G1 arrest. Potent inhibitor of cyclin E- and cyclin A-CDK2 complexes. Forms a complex with cyclin type D-CDK4 complexes and is involved in the assembly, stability, and modulation of CCND1-CDK4 complex activation. Acts either as an inhibitor or an activator of cyclin type D-CDK4 complexes depending on its phosphorylation state and/or stoichometry. The chain is Cyclin-dependent kinase inhibitor 1B (CDKN1B) from Cricetulus griseus (Chinese hamster).